The following is a 347-amino-acid chain: S-adenosylmethionine:tRNA ribosyltransferase-isomerase (347 aa).

Belongs to the QueA family. In terms of assembly, monomer.

Its subcellular location is the cytoplasm. It catalyses the reaction 7-aminomethyl-7-carbaguanosine(34) in tRNA + S-adenosyl-L-methionine = epoxyqueuosine(34) in tRNA + adenine + L-methionine + 2 H(+). It functions in the pathway tRNA modification; tRNA-queuosine biosynthesis. Transfers and isomerizes the ribose moiety from AdoMet to the 7-aminomethyl group of 7-deazaguanine (preQ1-tRNA) to give epoxyqueuosine (oQ-tRNA). The chain is S-adenosylmethionine:tRNA ribosyltransferase-isomerase from Streptococcus thermophilus (strain ATCC BAA-491 / LMD-9).